Consider the following 291-residue polypeptide: Verruculogen synthase (291 aa).

The active site involves Tyr-68.

It belongs to the PhyH family. In terms of assembly, homodimer. Requires Fe cation as cofactor.

The enzyme catalyses fumitremorgin B + 2-oxoglutarate + AH2 + 2 O2 = verruculogen + succinate + A + CO2 + H2O. It participates in mycotoxin biosynthesis. In terms of biological role, verruculogen synthase; part of the gene cluster that mediates the biosynthesis of fumitremorgins, indole alkaloids that carry not only intriguing chemical structures, but also interesting biological and pharmacological activities. The biosynthesis of fumitremorgin-type alkaloids begins by condensation of the two amino acids L-tryptophan and L-proline to brevianamide F, catalyzed by the non-ribosomal peptide synthetase ftmA. Brevianamide F is then prenylated by the prenyltransferase ftmPT1/ftmB in the presence of dimethylallyl diphosphate, resulting in the formation of tryprostatin B. The three cytochrome P450 monooxygenases, ftmP450-1/ftmC, ftmP450-2/ftmE and ftmP450-3/FtmG, are responsible for the conversion of tryprostatin B to 6-hydroxytryprostatin B, tryprostatin A to fumitremorgin C and fumitremorgin C to 12,13-dihydroxyfumitremorgin C, respectively. The putative methyltransferase ftmMT/ftmD is expected for the conversion of 6-hydroxytryprostatin B to tryprostatin A. FtmPT2/FtmH catalyzes the prenylation of 12,13-dihydroxyfumitre-morgin C in the presence of dimethylallyl diphosphate, resulting in the formation of fumitremorgin B. Fumitremorgin B is further converted to verruculogen by ftmOx1/ftmF via the insertion of an endoperoxide bond between the two prenyl moieties. In some fungal species, verruculogen is further converted to fumitremorgin A, but the enzymes involved in this step have not been identified yet. In Aspergillus fumigatus (strain ATCC MYA-4609 / CBS 101355 / FGSC A1100 / Af293) (Neosartorya fumigata), this protein is Verruculogen synthase.